A 1320-amino-acid chain; its full sequence is Tetratricopeptide repeat protein 21A (1320 aa).

TPR repeat units lie at residues 4–38 (NDSSLMAGIIYYSQEKYFHHVQQAAAVGLEKFSND), 110–143 (GTALYYAGLFLWLIGRHDKAKEYIDRMLKISRGF), 146–180 (AYVLRGWVDLTSDKPHTAKKAIEYLEQGIQDTKDV), 181–213 (LGLMGKAMYFMMQQNYSEALEVVNQITVTSGSF), 215–247 (PALVLKMQLFLARQDWEQTVEMGHRILEKDESN), 334–367 (VHVATELGYLFILKNQVKEALLWYSEAMKLDKDG), 502–534 (IDPLYLMAQVRYYSELENAQSILQRCLELDPAS), 572–605 (PLYHLIKARALNKAGDYPEAIKTLKMVIKLPALK), 728–761 (PHTSLLLGDALMSILEPEKALEVYDEAYRQNPHD), 762–795 (ASLASRIGHAYVKAHQYTEAIEYYEAAQKINGQD), 797–828 (LCCDLGKLLLKLKKVNKAEKVLKQALEHDIVQ), 837–869 (VKCLLLLAKVYKSHKKEAVIETLNKALDLQSRI), 889–922 (ASICIQFAEHYLAEKEYDKAVQSYKDVFSYLPTD), 924–956 (KVMLELAQLYLLQGHLDLCEQHCAILLQTEQNH), 957–990 (ETASVLMADLMFRKQKHEAAINLYHQVLEKAPDN), 1028–1061 (PGFNYCRGIYCWHIGQPNEALKFLNKARKDSTWG), 1201–1234 (EKSWLLLADIYCQGSKFDLALELLRRCVQYNKSC), 1236–1268 (KAYEYMGFIMEKEQSYKDAVTNYKLAWKYSHHA), and 1270–1303 (PAIGFKLAFNYLKDKKFVEAIEICNDVLREHPDY).

The protein belongs to the TTC21 family. As to quaternary structure, interacts with IFT20. Interacts with IFT52. Interacts with IFT140. Interacts with CEP78; regulating IFT20 stability and localization. As to expression, strongly expressed in testis.

Its function is as follows. Intraflagellar transport (IFT)-associated protein required for spermatogenesis. Required for sperm flagellar formation and intraflagellar transport. This Homo sapiens (Human) protein is Tetratricopeptide repeat protein 21A.